We begin with the raw amino-acid sequence, 117 residues long: Prefoldin subunit beta (117 aa).

Belongs to the prefoldin subunit beta family. In terms of assembly, heterohexamer of two alpha and four beta subunits.

It localises to the cytoplasm. In terms of biological role, molecular chaperone capable of stabilizing a range of proteins. Seems to fulfill an ATP-independent, HSP70-like function in archaeal de novo protein folding. This is Prefoldin subunit beta from Methanosarcina mazei (strain ATCC BAA-159 / DSM 3647 / Goe1 / Go1 / JCM 11833 / OCM 88) (Methanosarcina frisia).